A 102-amino-acid chain; its full sequence is MGKAVNIEHVEERVESELMPPPMYKVILNNDDYTPMDFVIEVLQLFFKKNEQDATDIMLAIHNQGKGICGVFPFGIAETKVAQVNQFARQNQHPLLCSLEKA.

It belongs to the ClpS family. As to quaternary structure, binds to the N-terminal domain of the chaperone ClpA.

Functionally, involved in the modulation of the specificity of the ClpAP-mediated ATP-dependent protein degradation. The polypeptide is ATP-dependent Clp protease adapter protein ClpS (Shewanella sediminis (strain HAW-EB3)).